We begin with the raw amino-acid sequence, 692 residues long: Polyribonucleotide nucleotidyltransferase (692 aa).

Mg(2+) is bound by residues aspartate 484 and aspartate 490. Residues 551–610 (PRIITIQINPDRIRDVIGPGGKVIRALTEETGATIDIQDNGTVTIASVDGEAGAAAKRRI) enclose the KH domain. One can recognise an S1 motif domain in the interval 620–688 (DTIYDGKVAK…RQGKIKLSMK (69 aa)).

It belongs to the polyribonucleotide nucleotidyltransferase family. Component of the RNA degradosome, which is a multiprotein complex involved in RNA processing and mRNA degradation. Mg(2+) serves as cofactor.

It is found in the cytoplasm. It catalyses the reaction RNA(n+1) + phosphate = RNA(n) + a ribonucleoside 5'-diphosphate. Functionally, involved in mRNA degradation. Catalyzes the phosphorolysis of single-stranded polyribonucleotides processively in the 3'- to 5'-direction. This is Polyribonucleotide nucleotidyltransferase from Acidithiobacillus ferrooxidans (strain ATCC 53993 / BNL-5-31) (Leptospirillum ferrooxidans (ATCC 53993)).